A 221-amino-acid chain; its full sequence is Superoxide dismutase [Mn] 1, mitochondrial (221 aa).

A mitochondrion-targeting transit peptide spans 1-24; it reads MLQNTVRCVSKLVQPITGVAAVRS. His-50, His-98, Asp-182, and His-186 together coordinate Mn(2+).

Belongs to the iron/manganese superoxide dismutase family. Homotetramer. It depends on Mn(2+) as a cofactor.

Its subcellular location is the mitochondrion matrix. The enzyme catalyses 2 superoxide + 2 H(+) = H2O2 + O2. Functionally, destroys superoxide anion radicals which are normally produced within the cells and which are toxic to biological systems. This chain is Superoxide dismutase [Mn] 1, mitochondrial (sod-2), found in Caenorhabditis elegans.